The sequence spans 906 residues: MASRHRRGAFPAGAKAAPEAEAAKESVAVAVRFRPLSPREVRRGEKIAWYADGETVARSEQSNLAYAYDRVFGPTTTTRHIYDAVAQYVVNGAMKGINGTIFAYGVTSSGKTHTMHGDQISPGVIPLAVKDIFNIIQETPNREFLLRVSYLEIYNEVVNDLLNPAGQNLRIREDLQGTIVEGIKEEAVLSPVHALSLIAAGEELRHVGSTNFNLLSSRSHTIFTLTIESSPRGQSNEAEAVTLSQLNLIDLAGSESSRVETAGVHQKEGSYINKSLLTLGKVISKLTDEKATHIPFRDSKLTRLLKSSLSGQGRVSLICTVTPASSNSEETHNTLKFAHRAKHIEIQATQNKIMDARSLIKKYQNEIRQLKEELEQLRRSIRTGTPIEDTMQKKHHLLETKEDCNVKLQSRLEQGEEAKAALLERIEHLTELILVSAKASRTTKSSHCPRRRHSFGEEELAYLPYERQDIILDNESNMLFVPIEGFGEKFKSSPKEETENQKGHLNWLNLRKCDSGSTNLTSSDGENPSSTKSLPALSTPLGIGFFNVTSEQRMSDYMLAENVPANLLCVGHREFPSDSLPVQETPLVSRKTSDHVDILREQFNILSGEVALHQSVLKRLSEEAGKNAMNEQIEMEMKVVNDEVKLNKQKIASLERRISNSMSNSRGMHDNLELSLPYIEIPEQLNEKAFQLEASECQEFLLSERTTFQHNTGIVQETGSQAHKGKPLPSDVSDEFLKKASQAEIDELKQRVSELTEAKSQLDSCNHKLLEESTYAKGLASVTSVELKALSVKVTKLMKQNERLSSELASGRNQRRGSHGPRGARRESHTKRYEPARRGDMNALEAMLKEKDQRQAELHTKIEESKQKEAFLEKELANMWTVLANLKKTRGIDQEDFDSKYNGSWA.

The 319-residue stretch at 26-344 (SVAVAVRFRP…LKFAHRAKHI (319 aa)) folds into the Kinesin motor domain. 105 to 112 (GVTSSGKT) is a binding site for ATP. 3 coiled-coil regions span residues 346–385 (IQATQNKIMDARSLIKKYQNEIRQLKEELEQLRRSIRTGT), 733–814 (SDEF…GRNQ), and 839–875 (GDMNALEAMLKEKDQRQAELHTKIEESKQKEAFLEKE). The interval 803–840 (RLSSELASGRNQRRGSHGPRGARRESHTKRYEPARRGD) is disordered. A compositionally biased stretch (basic residues) spans 813–823 (NQRRGSHGPRG). Positions 824-840 (ARRESHTKRYEPARRGD) are enriched in basic and acidic residues.

This sequence belongs to the TRAFAC class myosin-kinesin ATPase superfamily. Kinesin family. KIN-7 subfamily.

The polypeptide is Kinesin-like protein KIN-7G (Oryza sativa subsp. japonica (Rice)).